The following is a 27-amino-acid chain: Histone H1.3, embryonic (27 aa).

An H15 domain is found at 1–27 (HVVAAITALKERGGSSHQALKKYKAAN).

The protein belongs to the histone H1/H5 family.

Its subcellular location is the nucleus. It localises to the chromosome. In terms of biological role, histones H1 are necessary for the condensation of nucleosome chains into higher-order structures. The polypeptide is Histone H1.3, embryonic (Parechinus angulosus (Angulate sea urchin)).